The sequence spans 582 residues: PTS system lactose-specific EIICB component (582 aa).

Residues 8–409 enclose the PTS EIIC type-3 domain; that stretch reads IEKGKPFFEK…VVDVIIYYPF (402 aa). 9 consecutive transmembrane segments (helical) span residues 30 to 50, 64 to 84, 103 to 123, 137 to 157, 176 to 196, 222 to 242, 283 to 303, 339 to 359, and 381 to 401; these read GFIA…ITYV, GILM…VAGT, INFI…AADP, KGLL…NFFV, VFKD…LDLL, GWIG…VGIH, FVAT…FMWL, VFFI…KFFV, and IVMG…LIVV. Residues 453–473 are disordered; the sequence is ASEADTDDTSSVDETTSTSST. The segment covering 464-473 has biased composition (low complexity); sequence VDETTSTSST. A PTS EIIB type-3 domain is found at 479-582; sequence QTNVLVLCAG…LEFVKQQFNN (104 aa). C486 functions as the Phosphocysteine intermediate; for EIIB activity in the catalytic mechanism. C486 carries the phosphocysteine; by EIIA modification.

It localises to the cell membrane. The enzyme catalyses lactose(out) + N(pros)-phospho-L-histidyl-[protein] = lactose 6-phosphate(in) + L-histidyl-[protein]. Its function is as follows. The phosphoenolpyruvate-dependent sugar phosphotransferase system (sugar PTS), a major carbohydrate active transport system, catalyzes the phosphorylation of incoming sugar substrates concomitantly with their translocation across the cell membrane. The enzyme II LacEF PTS system is involved in lactose transport. The chain is PTS system lactose-specific EIICB component from Staphylococcus epidermidis (strain ATCC 35984 / DSM 28319 / BCRC 17069 / CCUG 31568 / BM 3577 / RP62A).